The following is a 295-amino-acid chain: Acetylglutamate kinase (295 aa).

Substrate is bound by residues 66–67 (GG), Arg88, and Asn193.

This sequence belongs to the acetylglutamate kinase family. ArgB subfamily.

The protein resides in the cytoplasm. It carries out the reaction N-acetyl-L-glutamate + ATP = N-acetyl-L-glutamyl 5-phosphate + ADP. The protein operates within amino-acid biosynthesis; L-arginine biosynthesis; N(2)-acetyl-L-ornithine from L-glutamate: step 2/4. Its function is as follows. Catalyzes the ATP-dependent phosphorylation of N-acetyl-L-glutamate. The protein is Acetylglutamate kinase of Rhizobium rhizogenes (strain K84 / ATCC BAA-868) (Agrobacterium radiobacter).